A 660-amino-acid polypeptide reads, in one-letter code: MIKNYQEYKEAVEKLKRWAYAYYVLDNPEVPDEVYDKLYREVEEYEKAHPDQIDPTSPTQRIGAEPAKEFKKIKHLSKMWSMEDVFNQREMHEWLERVYKNAGRKDLQFYIEPKFDGASLNLIYENGLLKSAATRGDGEVGEDVTANAKTIPSIPLGIDYKGLIEIRGEVVIRKDDFEKLNHERALKGESTFANPRNAAAGSLRQLDPKVTAQRKLYFYPWDIGYNTLNFKYQHEKMDFVYQQGFIKPFKRAICENEEEIQQLYEEFSKERDKLPVMLDGMVVKVDEIALHEILGYTVKYPRWMVAYKFPAVEKMTRIIDIVPQVGRTGVITPVAILEPVEIEGVVVERATLHNYAEIERKDIRIGDMVIVIRSGDVIPEVTKVLTQYRTGKEKKVERPKVCPVCGQPVLDEGILIKCQNLSCPARVVNSIIYFASKQCLDISGLGEATVKLLYEKGLVKDVVDLFKLKKEDLLRLPGFAEKKAQNLIDATQSVKGVECWRFVNALGIEHIGEVASKKLCEKFGLDWYKAPKEKLYEIEGFGPEMVRSIEEFVEVNKEKIEKLIELLQPTEPKKEEEVENSPLAHKTVVLTGEMKLPRSKIKELLERAGAHVTNSVSHHTDYVFYGENPGSKFQKAQQLGVPLLPEEKMWELLKEAGIEA.

NAD(+) is bound by residues 32–36 (DEVYD), 81–82 (SM), and glutamate 112. Catalysis depends on lysine 114, which acts as the N6-AMP-lysine intermediate. Arginine 135, glutamate 169, lysine 284, and lysine 308 together coordinate NAD(+). The Zn(2+) site is built by cysteine 402, cysteine 405, cysteine 418, and cysteine 423. The BRCT domain occupies 578–660 (VENSPLAHKT…ELLKEAGIEA (83 aa)).

It belongs to the NAD-dependent DNA ligase family. LigA subfamily. The cofactor is Mg(2+). It depends on Mn(2+) as a cofactor.

The catalysed reaction is NAD(+) + (deoxyribonucleotide)n-3'-hydroxyl + 5'-phospho-(deoxyribonucleotide)m = (deoxyribonucleotide)n+m + AMP + beta-nicotinamide D-nucleotide.. Its function is as follows. DNA ligase that catalyzes the formation of phosphodiester linkages between 5'-phosphoryl and 3'-hydroxyl groups in double-stranded DNA using NAD as a coenzyme and as the energy source for the reaction. It is essential for DNA replication and repair of damaged DNA. This is DNA ligase from Nitratiruptor sp. (strain SB155-2).